A 267-amino-acid polypeptide reads, in one-letter code: Heme-containing CO-sensing transcriptional regulator RcoM 2 (267 aa).

The PAS domain maps to 15–86; the sequence is RAETFQHKLE…KSRDKLRFLL (72 aa). The heme site is built by histidine 74 and methionine 104. The 106-residue stretch at 161-266 folds into the HTH LytTR-type domain; the sequence is IPVYRKSRVI…TAQLKELLGV (106 aa).

Requires heme as cofactor.

The protein localises to the cytoplasm. Functionally, one-component, b-type heme-containing aerobic sensor and transcriptional regulator that responds to CO by activating the expression of the oxidation operon cox. The protein is Heme-containing CO-sensing transcriptional regulator RcoM 2 (rcoM2) of Paraburkholderia xenovorans (strain LB400).